Reading from the N-terminus, the 121-residue chain is MMIKIAVVLCAVMATSMVFANDVKEQELADLLDLLISEEVSSPDDAVAESWGHKLRSSWNKVKHAVKKGAGYASGACRVLGHSPQEARAKVLEAFPEMKESDLDEEQVGKYCAVAHAIHGR.

The N-terminal stretch at 1–20 (MMIKIAVVLCAVMATSMVFA) is a signal peptide. The propeptide occupies 21–50 (NDVKEQELADLLDLLISEEVSSPDDAVAES). Residues W51 and W59 each carry the 6'-bromotryptophan modification. An intrachain disulfide couples C77 to C112. Residues 83 to 106 (SPQEARAKVLEAFPEMKESDLDEE) constitute a propeptide that is removed on maturation. Q107 is modified (pyrrolidone carboxylic acid). At H119 the chain carries Histidine amide.

In terms of assembly, heterodimer of a light and a heavy chain, probably disulfide-linked.

In terms of biological role, has antimicrobial activity against Gram-negative bacteria, Gram-positive bacteria and against fungi with minimum inhibitory concentration (MIC) between 0.78 uM and 50 uM. Shows little hemolytic activity at concentrations up to 12.5 uM but &gt;50% lysis at 100 uM. The protein is Centrocin 2 of Echinus esculentus (Sea urchin).